We begin with the raw amino-acid sequence, 113 residues long: MTAPSVSAISAYRQLLRATRIAFKDDYRILLAARSEARKQFNAHKRTAVDTPMQIQHALETASILRHNIVQGIRDAEKEDAKWELRIHDEIERGDNDSVKIGGKNVKIEKACS.

This sequence belongs to the complex I LYR family. MZM1 subfamily. As to quaternary structure, interacts with RIP1.

The protein localises to the mitochondrion matrix. Its function is as follows. Assembly factor required for Rieske Fe-S protein RIP1 incorporation into the cytochrome b-c1 (CIII) complex. Functions as a chaperone, binding to this subunit within the mitochondrial matrix and stabilizing it prior to its translocation and insertion into the late CIII dimeric intermediate within the mitochondrial inner membrane. Modulates the mitochondrial matrix zinc pool. The chain is Mitochondrial zinc maintenance protein 1, mitochondrial (MZM1) from Talaromyces marneffei (strain ATCC 18224 / CBS 334.59 / QM 7333) (Penicillium marneffei).